The sequence spans 545 residues: CTP synthase (545 aa).

The amidoligase domain stretch occupies residues M1–F266. S13 serves as a coordination point for CTP. A UTP-binding site is contributed by S13. ATP is bound by residues S14–I19 and D71. Positions 71 and 140 each coordinate Mg(2+). Residues D147–E149, K187–Q192, and K223 contribute to the CTP site. Residues K187–Q192 and K223 contribute to the UTP site. K239 to A241 lines the ATP pocket. Positions R292–K543 constitute a Glutamine amidotransferase type-1 domain. G353 is a binding site for L-glutamine. C380 functions as the Nucleophile; for glutamine hydrolysis in the catalytic mechanism. L-glutamine is bound by residues L381 to Q384, E404, and R471. Active-site residues include H516 and E518.

This sequence belongs to the CTP synthase family. As to quaternary structure, homotetramer.

It catalyses the reaction UTP + L-glutamine + ATP + H2O = CTP + L-glutamate + ADP + phosphate + 2 H(+). It carries out the reaction L-glutamine + H2O = L-glutamate + NH4(+). The enzyme catalyses UTP + NH4(+) + ATP = CTP + ADP + phosphate + 2 H(+). It participates in pyrimidine metabolism; CTP biosynthesis via de novo pathway; CTP from UDP: step 2/2. With respect to regulation, allosterically activated by GTP, when glutamine is the substrate; GTP has no effect on the reaction when ammonia is the substrate. The allosteric effector GTP functions by stabilizing the protein conformation that binds the tetrahedral intermediate(s) formed during glutamine hydrolysis. Inhibited by the product CTP, via allosteric rather than competitive inhibition. Functionally, catalyzes the ATP-dependent amination of UTP to CTP with either L-glutamine or ammonia as the source of nitrogen. Regulates intracellular CTP levels through interactions with the four ribonucleotide triphosphates. The protein is CTP synthase of Acinetobacter baumannii (strain ACICU).